The sequence spans 423 residues: Maintenance of mitochondrial morphology protein 1 (423 aa).

The Lumenal segment spans residues 1 to 15 (MWLDDVASELSFTQG). A helical transmembrane segment spans residues 16–36 (LLLGQLSIVILIGAFIKFFIF). The Cytoplasmic segment spans residues 37-423 (GDPPSPDVSA…PGSMPGLSMA (387 aa)). Residues 110-322 (QPESLDWFNV…EPRFQQIELP (213 aa)) form the SMP-LTD domain. Disordered stretches follow at residues 327-370 (RKKN…EAET) and 394-423 (SEEGLRFRRRSRGRGDEYAMPGSMPGLSMA). A compositionally biased stretch (basic and acidic residues) spans 350 to 367 (RSRDVERDLREEARKEVE).

This sequence belongs to the MMM1 family. In terms of assembly, homodimer. Component of the ER-mitochondria encounter structure (ERMES) or MDM complex, composed of mmm1, mdm10, mdm12 and mdm34. A mmm1 homodimer associates with one molecule of mdm12 on each side in a pairwise head-to-tail manner, and the SMP-LTD domains of mmm1 and mdm12 generate a continuous hydrophobic tunnel for phospholipid trafficking.

It is found in the endoplasmic reticulum membrane. Its function is as follows. Component of the ERMES/MDM complex, which serves as a molecular tether to connect the endoplasmic reticulum (ER) and mitochondria. Components of this complex are involved in the control of mitochondrial shape and protein biogenesis, and function in nonvesicular lipid trafficking between the ER and mitochondria. The mdm12-mmm1 subcomplex functions in the major beta-barrel assembly pathway that is responsible for biogenesis of all outer membrane beta-barrel proteins, and acts in a late step after the SAM complex. The mdm10-mdm12-mmm1 subcomplex further acts in the TOM40-specific pathway after the action of the mdm12-mmm1 complex. Essential for establishing and maintaining the structure of mitochondria and maintenance of mtDNA nucleoids. In Sclerotinia sclerotiorum (strain ATCC 18683 / 1980 / Ss-1) (White mold), this protein is Maintenance of mitochondrial morphology protein 1.